The primary structure comprises 377 residues: Enoyl reductase cheB (377 aa).

Residues 18–361 (GGSLVIARDV…REISAEKLVV (344 aa)) are enoyl reductase (ER) domain. 49 to 52 (CDFK) serves as a coordination point for NADP(+). 137–144 (PCCIATMG) serves as a coordination point for substrate. Residues 173–176 (SSSV), 200–203 (SPKN), Y218, 265–266 (LE), and T283 each bind NADP(+). 285–289 (GAIII) contributes to the substrate binding site. Residue 354–355 (IS) coordinates NADP(+).

It belongs to the zinc-containing alcohol dehydrogenase family. Heme is required as a cofactor.

The protein operates within secondary metabolite biosynthesis. Functionally, enoyl reductase; part of the gene cluster that mediates the biosynthesis of chaetoglobosin A which has a unique inhibitory activity against actin polymerization in mammalian cells. Chaetoglobosin A and its intermediates are involved in the morphological differentiation of C.globosum. The first step of the pathway is the synthesis of prochaetoglobosin I via condensation of one acetyl-CoA, 8 malonyl-CoA, and a L-tryptophan molecule by the PKS-NRPS hybrid synthetase cheA, followed by reduction of backbone double bond to install desired geometry by the enoyl reductase cheB. Further multiple oxidation steps performed by the cytochrome P450 monooxygenases cheE and cheG, as well as by the FAD-linked oxidoreductase cheF, lead to the formation of chaetoglobosin A. Depending on the order of action of these reductases, distinct intermediates can be identified. Within the pathway, the cytochrome P450 monooxygenase cheE catalyzes a stereospecific epoxidation on prochaetoglobosin I, cytoglobosin D, and chaetoglobosin J intermediates. The FAD-linked oxidoreductase cheF performs dehydrogenation of the C-20 hydroxyl groups in the 20-dihyrochaetoglobosin A and cytoglobosin D intermediates. Finally, the cytochrome P450 monooxygenase cheG can catalyze the stereospecific dihydroxylation of prochaetoglobosin I and prochaetoglobosin IV at C-19 and C-20, respectively. The Diels-Alderase cheD may play a role in the post-PKS-NRPS biosynthetic steps catalyzing Diels-Alder cyclization. This Chaetomium globosum (strain ATCC 6205 / CBS 148.51 / DSM 1962 / NBRC 6347 / NRRL 1970) (Soil fungus) protein is Enoyl reductase cheB.